A 194-amino-acid polypeptide reads, in one-letter code: E3 ubiquitin-protein ligase RNF185 (194 aa).

A disordered region spans residues 1–32 (MASKGPTTSASTKSSSTGGTSGSSSSNGAGDN). A required for ubiquitin ligase activity and protection against ER stress-induced cell death region spans residues 31–82 (DNTNQDNTFECNICLDTAKDAVISLCGHLFCWPCLHQWLETRPNRQVCPVCK). The RING-type zinc finger occupies 41–82 (CNICLDTAKDAVISLCGHLFCWPCLHQWLETRPNRQVCPVCK). The segment at 92-125 (PLYGRGSTGQQDPREKTPPRPQGQRPEPENRGGF) is disordered. Helical transmembrane passes span 133-153 (GGFQ…ATAF) and 174-194 (QFLS…LLIA).

The protein localises to the mitochondrion outer membrane. It is found in the endoplasmic reticulum membrane. It catalyses the reaction S-ubiquitinyl-[E2 ubiquitin-conjugating enzyme]-L-cysteine + [acceptor protein]-L-lysine = [E2 ubiquitin-conjugating enzyme]-L-cysteine + N(6)-ubiquitinyl-[acceptor protein]-L-lysine.. It functions in the pathway protein modification; protein ubiquitination. Its function is as follows. E3 ubiquitin-protein ligase that regulates selective mitochondrial autophagy by mediating 'Lys-63'-linked polyubiquitination. Acts in the endoplasmic reticulum (ER)-associated degradation (ERAD) pathway, which targets misfolded proteins that accumulate in the endoplasmic reticulum (ER) for ubiquitination and subsequent proteasome-mediated degradation. Protects cells from ER stress-induced apoptosis. Responsible for the cotranslational ubiquitination and degradation of CFTR in the ERAD pathway. Also acts as a regulator of the innate antiviral response by catalyzing 'Lys-27'-linked polyubiquitination of CGAS, thereby promoting CGAS cyclic GMP-AMP synthase activity. Preferentially associates with the E2 enzymes UBE2J1 and UBE2J2. This Gallus gallus (Chicken) protein is E3 ubiquitin-protein ligase RNF185 (RNF185).